We begin with the raw amino-acid sequence, 170 residues long: Cyclic pyranopterin monophosphate synthase (170 aa).

The tract at residues 1–25 is disordered; the sequence is MADPSTLTHPDPEGGVRMMDASQKS. Residues 78–80 and 116–117 each bind substrate; these read LCH and ME. Asp131 is a catalytic residue.

Belongs to the MoaC family. Homohexamer; trimer of dimers.

The enzyme catalyses (8S)-3',8-cyclo-7,8-dihydroguanosine 5'-triphosphate = cyclic pyranopterin phosphate + diphosphate. It participates in cofactor biosynthesis; molybdopterin biosynthesis. Catalyzes the conversion of (8S)-3',8-cyclo-7,8-dihydroguanosine 5'-triphosphate to cyclic pyranopterin monophosphate (cPMP). The chain is Cyclic pyranopterin monophosphate synthase from Salinibacter ruber (strain DSM 13855 / M31).